A 182-amino-acid chain; its full sequence is Small ribosomal subunit protein uS5 (182 aa).

The 64-residue stretch at 16–79 (FVDRLVHINR…EAAKRGMIYV (64 aa)) folds into the S5 DRBM domain.

It belongs to the universal ribosomal protein uS5 family. As to quaternary structure, part of the 30S ribosomal subunit. Contacts proteins S4 and S8.

In terms of biological role, with S4 and S12 plays an important role in translational accuracy. Located at the back of the 30S subunit body where it stabilizes the conformation of the head with respect to the body. The chain is Small ribosomal subunit protein uS5 from Bartonella quintana (strain Toulouse) (Rochalimaea quintana).